Reading from the N-terminus, the 242-residue chain is uncharacterized protein (242 aa).

Residues 3 to 116 form the Response regulatory domain; the sequence is TALVIDDEPF…RLRKTVKRLS (114 aa). Aspartate 54 is modified (4-aspartylphosphate). An HTH LytTR-type domain is found at 139–240; the sequence is IPCIGHNRIV…LKLLKEMLGL (102 aa).

This is an uncharacterized protein from Vibrio vulnificus (strain CMCP6).